The chain runs to 125 residues: MFAVIKTGGKQYNVSADDTITVMALPGEKGDAVSFDTVLMFGGEGQSTLGAPFIEGASVVGEIVEQKRGPKVISFKKRRRQNSKRKRGHRQDLTLVRITSLGAGGASPAAAAASSETPAASAPEA.

The segment covering 75–89 (FKKRRRQNSKRKRGH) has biased composition (basic residues). Disordered regions lie at residues 75-94 (FKKR…QDLT) and 103-125 (AGGA…APEA). Residues 106-125 (ASPAAAAASSETPAASAPEA) are compositionally biased toward low complexity.

It belongs to the bacterial ribosomal protein bL21 family. As to quaternary structure, part of the 50S ribosomal subunit. Contacts protein L20.

Functionally, this protein binds to 23S rRNA in the presence of protein L20. The protein is Large ribosomal subunit protein bL21 of Methylocella silvestris (strain DSM 15510 / CIP 108128 / LMG 27833 / NCIMB 13906 / BL2).